A 186-amino-acid polypeptide reads, in one-letter code: DNA-invertase (186 aa).

One can recognise a Resolvase/invertase-type recombinase catalytic domain in the interval 1 to 134 (MLIGYVRVST…AGLDAARAEG (134 aa)). The active-site O-(5'-phospho-DNA)-serine intermediate is the S9. The segment at residues 161–180 (RKQVAIIYDVAVSTLYKKFP) is a DNA-binding region (H-T-H motif).

Belongs to the site-specific recombinase resolvase family.

Performs inversion of a viral 3 kp segment (C-segment) that encodes two alternate pairs of tail fiber proteins thereby modifying the host specificity of the virus. This is DNA-invertase (cin) from Enterobacteriaceae (Bacteriophage P1).